The following is an 82-amino-acid chain: Chaplin-E (82 aa).

The first 27 residues, 1-27 (MKNLKKAAAVTMVAGGLIAAGAGMASA), serve as a signal peptide directing secretion. Positions 41–81 (SPGVASGNLVQAPIHIPVNAVGNSVNVIGVLNPAFGNLGVN) constitute a Chaplin domain.

It belongs to the chaplin family. Short chaplin subfamily.

Its subcellular location is the cell surface. It is found in the secreted. It localises to the cell wall. The protein localises to the fimbrium. Its function is as follows. One of 8 partially redundant surface-active proteins required for efficient formation of aerial mycelium; the short chaplins assemble into a hydrophobic, amyloidal fibrillar surface layer that envelopes and protects aerial hyphae and spores, presumably anchored to the long chaplins. Chaplins have an overlapping function with the surface-active SapB peptide; chaplins are essential on minimal medium while on rich medium both chaplins and SapB are required for efficient aerial hyphae formation. Chaplins are also involved in cell attachment to a hydrophobic surface. Forms amyloid fibrils in vitro probably composed of stacked beta-sheets, at low extracellular concentrations individually restores the ability to form aerial hyphae to a chaplin-deficient strain, but does so less well than other short chaplins. A small chaplin extract (ChpD, ChpE, ChpF, ChpG and ChpH) self-assembles into 2 different amyloids; small fibrils at the air-water interface form an amphipathic membrane that resembles spore-surface structures involved in aerial hyphae formation, and hydrophilic fibrils in solution that resemble the fibers that attach cells to a hydrophobic surface. At the air-water interface the hydrophilic surface is in contact with water (probably equivalent to the peptidoglycan layer), while the hydrophobic face is exposed to the air, making the surface of the aerial hyphae hydrophobic. A minimal chaplin strain capable of forming aerial mycelium/hyphae on minimal medium contains ChpC, ChpE and ChpH. The strain also has restored rodlet formation on the hyphae surface. A second strain with ChpA, ChpD and ChpE makes slightly less robust hyphae. This essential chaplin may coordinate the assembly and/or polymerization of the other chaplins. A small chaplin extract applied to a chaplin-deficient strain restores aerial hyphae formation. The small chaplin extract forms an amyloid-like structure similar to that seen on the surface of cells without rodlets (rdlA-rdlB deletions), and is highly surface active, reducing surface tension from 72 to 26 mJ/m(2), which probably allows escape of hyphae from an aqueous environment into air. This chain is Chaplin-E, found in Streptomyces coelicolor (strain ATCC BAA-471 / A3(2) / M145).